The primary structure comprises 476 residues: Ribosomal RNA small subunit methyltransferase F (476 aa).

S-adenosyl-L-methionine-binding positions include 125–131 (AAAPGSK), glutamate 149, aspartate 176, and aspartate 194. Residue cysteine 247 is the Nucleophile of the active site.

This sequence belongs to the class I-like SAM-binding methyltransferase superfamily. RsmB/NOP family.

The protein localises to the cytoplasm. It carries out the reaction cytidine(1407) in 16S rRNA + S-adenosyl-L-methionine = 5-methylcytidine(1407) in 16S rRNA + S-adenosyl-L-homocysteine + H(+). Functionally, specifically methylates the cytosine at position 1407 (m5C1407) of 16S rRNA. This Aeromonas salmonicida (strain A449) protein is Ribosomal RNA small subunit methyltransferase F.